We begin with the raw amino-acid sequence, 333 residues long: Tryptophan--tRNA ligase (333 aa).

Residues 9 to 11 (QPT) and 17 to 18 (GN) contribute to the ATP site. The 'HIGH' region signature appears at 10–18 (PTNNLTLGN). D140 serves as a coordination point for L-tryptophan. ATP contacts are provided by residues 152–154 (GQD), I191, and 200–204 (KMSKS). Positions 200-204 (KMSKS) match the 'KMSKS' region motif.

The protein belongs to the class-I aminoacyl-tRNA synthetase family. As to quaternary structure, homodimer.

The protein localises to the cytoplasm. It carries out the reaction tRNA(Trp) + L-tryptophan + ATP = L-tryptophyl-tRNA(Trp) + AMP + diphosphate + H(+). Functionally, catalyzes the attachment of tryptophan to tRNA(Trp). The chain is Tryptophan--tRNA ligase from Ureaplasma parvum serovar 3 (strain ATCC 700970).